The chain runs to 161 residues: uncharacterized protein (161 aa).

This is an uncharacterized protein from Saccharomyces cerevisiae (strain ATCC 204508 / S288c) (Baker's yeast).